Reading from the N-terminus, the 337-residue chain is Tryptophan--tRNA ligase (337 aa).

ATP is bound by residues 12–14 (QPS) and 21–22 (GN). The 'HIGH' region signature appears at 13–22 (PSADSLHLGN). An L-tryptophan-binding site is contributed by Asp-138. ATP contacts are provided by residues 150-152 (GDD), Ile-189, and 198-202 (KMSKS). Residues 198–202 (KMSKS) carry the 'KMSKS' region motif.

It belongs to the class-I aminoacyl-tRNA synthetase family. Homodimer.

It localises to the cytoplasm. The enzyme catalyses tRNA(Trp) + L-tryptophan + ATP = L-tryptophyl-tRNA(Trp) + AMP + diphosphate + H(+). Catalyzes the attachment of tryptophan to tRNA(Trp). This chain is Tryptophan--tRNA ligase, found in Leifsonia xyli subsp. xyli (strain CTCB07).